The chain runs to 856 residues: Leucine--tRNA ligase (856 aa).

The 'HIGH' region motif lies at 42–52 (PYPSGNLHMGH). A 'KMSKS' region motif is present at residues 617 to 621 (KMSKS). K620 contacts ATP.

Belongs to the class-I aminoacyl-tRNA synthetase family.

It localises to the cytoplasm. The enzyme catalyses tRNA(Leu) + L-leucine + ATP = L-leucyl-tRNA(Leu) + AMP + diphosphate. This Rippkaea orientalis (strain PCC 8801 / RF-1) (Cyanothece sp. (strain PCC 8801)) protein is Leucine--tRNA ligase.